We begin with the raw amino-acid sequence, 448 residues long: Immunoglobulin G-binding protein G (448 aa).

Residues 1–33 (MEKEKKVKYFLRKSAFGLASVSAAFLVGSTVFA) form the signal peptide. A run of 4 repeats spans residues 104–140 (LAKA…IKDL), 179–215 (LAEA…VKEL), 228–282 (TYKL…TVTE), and 298–352 (TYKL…TVTE). The interval 104–215 (LAKAKADALK…AKTVEGVKEL (112 aa)) is 2 X 37 AA repeats. Residues 228 to 352 (TYKLILNGKT…DATKTFTVTE (125 aa)) are 2 X 55 AA repeats. The disordered stretch occupies residues 358–422 (PGDAPTEPEK…TLPTTGEGSN (65 aa)). Residues 384–412 (AKDDAKKDDTKKEDAKKPEAKKDDAKKAE) are compositionally biased toward basic and acidic residues. The interval 386–410 (DDAKKDDTKKEDAKKPEAKKDDAKK) is 5 X 5 AA repeats of [DE]-D-A-K-K. The LPXTG sorting signal motif lies at 414-418 (LPTTG). Threonine 417 bears the Pentaglycyl murein peptidoglycan amidated threonine mark. The propeptide at 418–448 (GEGSNPFFTAAALAVMAGAGALAVASKRKED) is removed by sortase.

The protein localises to the secreted. It localises to the cell wall. Functionally, binds to the constant Fc region of IgG with high affinity. This Streptococcus sp. group G protein is Immunoglobulin G-binding protein G (spg).